Consider the following 22-residue polypeptide: Phenol-soluble modulin alpha 3 peptide (22 aa).

The protein belongs to the phenol-soluble modulin alpha peptides family.

Peptide which can recruit, activate and subsequently lyse human neutrophils, thus eliminating the main cellular defense against infection. This is Phenol-soluble modulin alpha 3 peptide (psmA3) from Staphylococcus aureus (strain Mu3 / ATCC 700698).